An 876-amino-acid polypeptide reads, in one-letter code: Translation initiation factor IF-2 (876 aa).

The tr-type G domain maps to 378–547; it reads TRPPIITIMG…LTQSEMLELK (170 aa). The G1 stretch occupies residues 387-394; sequence GHVDHGKT. 387 to 394 contacts GTP; sequence GHVDHGKT. Residues 412–416 are G2; the sequence is RITQH. The segment at 433-436 is G3; that stretch reads DTPG. Residues 433–437 and 487–490 contribute to the GTP site; these read DTPGH and NKID. Residues 487 to 490 are G4; that stretch reads NKID. The segment at 523-525 is G5; sequence SAK.

The protein belongs to the TRAFAC class translation factor GTPase superfamily. Classic translation factor GTPase family. IF-2 subfamily.

Its subcellular location is the cytoplasm. Functionally, one of the essential components for the initiation of protein synthesis. Protects formylmethionyl-tRNA from spontaneous hydrolysis and promotes its binding to the 30S ribosomal subunits. Also involved in the hydrolysis of GTP during the formation of the 70S ribosomal complex. The protein is Translation initiation factor IF-2 of Buchnera aphidicola subsp. Baizongia pistaciae (strain Bp).